The following is a 426-amino-acid chain: Gamma-glutamyl phosphate reductase (426 aa).

The protein belongs to the gamma-glutamyl phosphate reductase family.

It is found in the cytoplasm. The enzyme catalyses L-glutamate 5-semialdehyde + phosphate + NADP(+) = L-glutamyl 5-phosphate + NADPH + H(+). It functions in the pathway amino-acid biosynthesis; L-proline biosynthesis; L-glutamate 5-semialdehyde from L-glutamate: step 2/2. Its function is as follows. Catalyzes the NADPH-dependent reduction of L-glutamate 5-phosphate into L-glutamate 5-semialdehyde and phosphate. The product spontaneously undergoes cyclization to form 1-pyrroline-5-carboxylate. This is Gamma-glutamyl phosphate reductase from Acidovorax ebreus (strain TPSY) (Diaphorobacter sp. (strain TPSY)).